Consider the following 167-residue polypeptide: Large ribosomal subunit protein uL22 (167 aa).

The segment at 120 to 167 (GSTATTVEDEAPKAKGAKGAKAKKAPAKKAAAKKAPAKKFAGKKTAKR) is disordered. Basic residues predominate over residues 134–167 (KGAKGAKAKKAPAKKAAAKKAPAKKFAGKKTAKR).

This sequence belongs to the universal ribosomal protein uL22 family. As to quaternary structure, part of the 50S ribosomal subunit.

Functionally, this protein binds specifically to 23S rRNA; its binding is stimulated by other ribosomal proteins, e.g. L4, L17, and L20. It is important during the early stages of 50S assembly. It makes multiple contacts with different domains of the 23S rRNA in the assembled 50S subunit and ribosome. In terms of biological role, the globular domain of the protein is located near the polypeptide exit tunnel on the outside of the subunit, while an extended beta-hairpin is found that lines the wall of the exit tunnel in the center of the 70S ribosome. The protein is Large ribosomal subunit protein uL22 of Koribacter versatilis (strain Ellin345).